The sequence spans 379 residues: S-(hydroxymethyl)glutathione dehydrogenase (379 aa).

Cysteine 47 contributes to the Zn(2+) binding site. NAD(+) is bound at residue histidine 48. Residues histidine 69, glutamate 70, cysteine 99, cysteine 102, cysteine 105, cysteine 113, and cysteine 176 each contribute to the Zn(2+) site. NAD(+)-binding positions include 201-206 (GAGCIG), aspartate 225, and 296-298 (IGV).

This sequence belongs to the zinc-containing alcohol dehydrogenase family. Class-III subfamily. Zn(2+) serves as cofactor.

The catalysed reaction is a primary alcohol + NAD(+) = an aldehyde + NADH + H(+). It carries out the reaction a secondary alcohol + NAD(+) = a ketone + NADH + H(+). It catalyses the reaction S-(hydroxymethyl)glutathione + NADP(+) = S-formylglutathione + NADPH + H(+). The enzyme catalyses S-(hydroxymethyl)glutathione + NAD(+) = S-formylglutathione + NADH + H(+). The catalysed reaction is S-nitrosoglutathione + NADH + H(+) = S-(hydroxysulfenamide)glutathione + NAD(+). Functionally, oxidizes long-chain alcohols and, in the presence of glutathione, is able to oxidize formaldehyde. Also acts as a S-nitroso-glutathione reductase by catalyzing the NADH-dependent reduction of S-nitrosoglutathione, thereby regulating protein S-nitrosylation. The chain is S-(hydroxymethyl)glutathione dehydrogenase (FLD1) from Komagataella pastoris (Yeast).